Reading from the N-terminus, the 410-residue chain is Translation initiation factor 2 subunit gamma (410 aa).

Residues 9–202 (QAEVNIGMVG…AIEEFIPTPK (194 aa)) enclose the tr-type G domain. The tract at residues 18–25 (GHVDHGKT) is G1. Aspartate 21, threonine 25, glycine 46, and threonine 48 together coordinate Mg(2+). Position 21 to 26 (21 to 26 (DHGKTT)) interacts with GTP. A G2 region spans residues 46–50 (GITIK). Residues cysteine 61, cysteine 64, cysteine 73, and cysteine 76 each coordinate Zn(2+). Positions 90–93 (DAPG) are G3. Residues 145-148 (NKIE) and 180-182 (SAL) each bind GTP. A G4 region spans residues 145 to 148 (NKIE). Residues 180 to 182 (SAL) are G5.

Belongs to the TRAFAC class translation factor GTPase superfamily. Classic translation factor GTPase family. EIF2G subfamily. Heterotrimer composed of an alpha, a beta and a gamma chain. The cofactor is Mg(2+).

The catalysed reaction is GTP + H2O = GDP + phosphate + H(+). EIF-2 functions in the early steps of protein synthesis by forming a ternary complex with GTP and initiator tRNA. The sequence is that of Translation initiation factor 2 subunit gamma from Thermococcus kodakarensis (strain ATCC BAA-918 / JCM 12380 / KOD1) (Pyrococcus kodakaraensis (strain KOD1)).